A 39-amino-acid polypeptide reads, in one-letter code: Bacteriocin SRCAM 602 (39 aa).

This sequence belongs to the bacteriocin class IIA/YGNGV family.

It localises to the secreted. Functionally, bacteriocin with antibacterial activity against C.jejuni. The protein is Bacteriocin SRCAM 602 of Paenibacillus polymyxa (Bacillus polymyxa).